The primary structure comprises 1030 residues: Carbamoyl phosphate synthase arginine-specific large chain (1030 aa).

A carboxyphosphate synthetic domain region spans residues 1 to 401; it reads MPKDTSISSI…AIQKAAASLE (401 aa). Arg-129, Arg-169, Gly-175, Gly-176, Lys-208, Ile-210, Glu-215, Gly-241, Val-242, His-243, Gln-284, and Glu-298 together coordinate ATP. Positions 133 to 327 constitute an ATP-grasp 1 domain; that stretch reads RSLMNELKQP…IAKMAAKLAV (195 aa). Mg(2+) is bound by residues Gln-284, Glu-298, and Asn-300. Residues Gln-284, Glu-298, and Asn-300 each coordinate Mn(2+). The interval 402 to 548 is oligomerization domain; sequence LKNIGTHLPE…YSTYFGETDG (147 aa). Positions 549–928 are carbamoyl phosphate synthetic domain; the sequence is DISRKEKKRA…ALKKIYTRVW (380 aa). In terms of domain architecture, ATP-grasp 2 spans 675 to 863; the sequence is YQLLDELGLK…MIPLATRLLA (189 aa). ATP contacts are provided by Arg-711, Gln-748, Val-750, Glu-754, Gly-779, Val-780, His-781, Ser-782, Gln-822, and Glu-834. Mg(2+) contacts are provided by Gln-822, Glu-834, and Asn-836. Residues Gln-822, Glu-834, and Asn-836 each contribute to the Mn(2+) site. The 103-residue stretch at 925–1027 folds into the MGS-like domain; sequence TRVWSQKGSI…KDLYKKEVAS (103 aa). Residues 929–1030 form an allosteric domain region; that stretch reads SQKGSIYLQN…YKKEVASCTQ (102 aa).

The protein belongs to the CarB family. Composed of two chains; the small (or glutamine) chain promotes the hydrolysis of glutamine to ammonia, which is used by the large (or ammonia) chain to synthesize carbamoyl phosphate. Tetramer of heterodimers (alpha,beta)4. It depends on Mg(2+) as a cofactor. The cofactor is Mn(2+).

The catalysed reaction is hydrogencarbonate + L-glutamine + 2 ATP + H2O = carbamoyl phosphate + L-glutamate + 2 ADP + phosphate + 2 H(+). It carries out the reaction hydrogencarbonate + NH4(+) + 2 ATP = carbamoyl phosphate + 2 ADP + phosphate + 2 H(+). The protein operates within amino-acid biosynthesis; L-arginine biosynthesis; carbamoyl phosphate from bicarbonate: step 1/1. Its function is as follows. Large subunit of the glutamine-dependent carbamoyl phosphate synthetase (CPSase). CPSase catalyzes the formation of carbamoyl phosphate from the ammonia moiety of glutamine, carbonate, and phosphate donated by ATP, constituting the first step of the biosynthetic pathway leading to arginine and/or urea. The large subunit (synthetase) binds the substrates ammonia (free or transferred from glutamine from the small subunit), hydrogencarbonate and ATP and carries out an ATP-coupled ligase reaction, activating hydrogencarbonate by forming carboxy phosphate which reacts with ammonia to form carbamoyl phosphate. The polypeptide is Carbamoyl phosphate synthase arginine-specific large chain (Bacillus subtilis (strain 168)).